The primary structure comprises 324 residues: Beta-ketoacyl-[acyl-carrier-protein] synthase III (324 aa).

Catalysis depends on residues Cys112 and His250. Residues 251-255 form an ACP-binding region; that stretch reads QANIR. The active site involves Asn280.

It belongs to the thiolase-like superfamily. FabH family. As to quaternary structure, homodimer.

The protein localises to the cytoplasm. The enzyme catalyses malonyl-[ACP] + acetyl-CoA + H(+) = 3-oxobutanoyl-[ACP] + CO2 + CoA. It participates in lipid metabolism; fatty acid biosynthesis. Functionally, catalyzes the condensation reaction of fatty acid synthesis by the addition to an acyl acceptor of two carbons from malonyl-ACP. Catalyzes the first condensation reaction which initiates fatty acid synthesis and may therefore play a role in governing the total rate of fatty acid production. Possesses both acetoacetyl-ACP synthase and acetyl transacylase activities. Its substrate specificity determines the biosynthesis of branched-chain and/or straight-chain of fatty acids. The chain is Beta-ketoacyl-[acyl-carrier-protein] synthase III from Clostridium novyi (strain NT).